Here is a 256-residue protein sequence, read N- to C-terminus: Type III pantothenate kinase (256 aa).

6-13 provides a ligand contact to ATP; that stretch reads DAGNSRIK. Residues Tyr90 and 97 to 100 contribute to the substrate site; that span reads GSDR. The Proton acceptor role is filled by Asp99. Residue Thr123 coordinates ATP. Thr187 serves as a coordination point for substrate.

Belongs to the type III pantothenate kinase family. In terms of assembly, homodimer. It depends on NH4(+) as a cofactor. Requires K(+) as cofactor.

Its subcellular location is the cytoplasm. The catalysed reaction is (R)-pantothenate + ATP = (R)-4'-phosphopantothenate + ADP + H(+). It functions in the pathway cofactor biosynthesis; coenzyme A biosynthesis; CoA from (R)-pantothenate: step 1/5. Its function is as follows. Catalyzes the phosphorylation of pantothenate (Pan), the first step in CoA biosynthesis. This is Type III pantothenate kinase from Burkholderia mallei (strain NCTC 10247).